A 261-amino-acid polypeptide reads, in one-letter code: Kallikrein 1-related peptidase b5 (261 aa).

The first 18 residues, 1 to 18, serve as a signal peptide directing secretion; that stretch reads MWFLILFLALSLGGIDAA. The propeptide at 19 to 24 is activation peptide; it reads PPVQSR. The 234-residue stretch at 25-258 folds into the Peptidase S1 domain; the sequence is IFGGFNCEKN…FNSWIKDTIA (234 aa). 5 cysteine pairs are disulfide-bonded: Cys31/Cys173, Cys50/Cys66, Cys152/Cys219, Cys184/Cys198, and Cys209/Cys234. The active-site Charge relay system is the His65. Residue Asn102 is glycosylated (N-linked (GlcNAc...) asparagine). The active-site Charge relay system is the Asp120. The active-site Charge relay system is the Ser213.

This sequence belongs to the peptidase S1 family. Kallikrein subfamily.

It catalyses the reaction Preferential cleavage of Arg-|-Xaa bonds in small molecule substrates. Highly selective action to release kallidin (lysyl-bradykinin) from kininogen involves hydrolysis of Met-|-Xaa or Leu-|-Xaa.. Its function is as follows. Glandular kallikreins cleave Met-Lys and Arg-Ser bonds in kininogen to release Lys-bradykinin. The sequence is that of Kallikrein 1-related peptidase b5 (Klk1b5) from Mus musculus (Mouse).